The chain runs to 400 residues: CinA-like protein (400 aa).

Belongs to the CinA family.

The sequence is that of CinA-like protein from Escherichia coli O9:H4 (strain HS).